Here is a 241-residue protein sequence, read N- to C-terminus: Homeobox protein TGIF2LX (241 aa).

Disordered stretches follow at residues M1–P58 and G127–S207. Positions E10 to D39 are enriched in polar residues. A DNA-binding region (homeobox; TALE-type) is located at residues E48–D111.

It belongs to the TALE/TGIF homeobox family.

It localises to the nucleus. In terms of biological role, may have a transcription role in testis. This Pan paniscus (Pygmy chimpanzee) protein is Homeobox protein TGIF2LX (TGIF2LX).